A 50-amino-acid chain; its full sequence is Cuticle protein CP498 (50 aa).

Repeat copies occupy residues 6-23 and 30-47.

As to expression, calcified shell.

The protein is Cuticle protein CP498 of Cancer pagurus (Rock crab).